The chain runs to 107 residues: uncharacterized protein (107 aa).

The interval 87–107 (KNRNGPKAEKRRPYVRAHAKW) is disordered.

This is an uncharacterized protein from Saccharomyces cerevisiae (strain ATCC 204508 / S288c) (Baker's yeast).